A 272-amino-acid polypeptide reads, in one-letter code: Proteasome subunit beta (272 aa).

The propeptide at 1-47 is removed in mature form; by autocatalysis; that stretch reads MSTGGDRLPEAFLRPGSSSFVEFLREVAPQSHPEHARPAGAGDVVHA. Thr48 (nucleophile) is an active-site residue.

The protein belongs to the peptidase T1B family. The 20S proteasome core is composed of 14 alpha and 14 beta subunits that assemble into four stacked heptameric rings, resulting in a barrel-shaped structure. The two inner rings, each composed of seven catalytic beta subunits, are sandwiched by two outer rings, each composed of seven alpha subunits. The catalytic chamber with the active sites is on the inside of the barrel. Has a gated structure, the ends of the cylinder being occluded by the N-termini of the alpha-subunits. Is capped by the proteasome-associated ATPase, ARC.

It is found in the cytoplasm. It catalyses the reaction Cleavage of peptide bonds with very broad specificity.. Its pathway is protein degradation; proteasomal Pup-dependent pathway. With respect to regulation, the formation of the proteasomal ATPase ARC-20S proteasome complex, likely via the docking of the C-termini of ARC into the intersubunit pockets in the alpha-rings, may trigger opening of the gate for substrate entry. Interconversion between the open-gate and close-gate conformations leads to a dynamic regulation of the 20S proteasome proteolysis activity. Functionally, component of the proteasome core, a large protease complex with broad specificity involved in protein degradation. This Beutenbergia cavernae (strain ATCC BAA-8 / DSM 12333 / CCUG 43141 / JCM 11478 / NBRC 16432 / NCIMB 13614 / HKI 0122) protein is Proteasome subunit beta.